A 172-amino-acid polypeptide reads, in one-letter code: Transcriptional regulator CdrL (172 aa).

The disordered stretch occupies residues Ser72–Glu113. Residues Cys116–Gly160 form a DZANK-type zinc finger.

The protein belongs to the CdrL family.

The protein localises to the cytoplasm. Its function is as follows. Transcriptional regulator involved in the control of cell division. In Halobacterium salinarum (strain ATCC 29341 / DSM 671 / R1), this protein is Transcriptional regulator CdrL.